The chain runs to 943 residues: MELAKAFEPADIERRWYPEWETQNYFAAGVDASKADNFCILLPPPNVTGTLHMGHGFNQTIMDALTRYYRMRGHNTLWQPGTDHAGIATQIVVERQLDAQGISRHDLGREKFLEKVWEWKEYSGNTITKQMRRMGTSPDWKRERFTMDAGLNKVVTETFVRLFNEGLIYRGKRLVNWDPKLNTAVSDLEVVQEEEDGFMWHIRYPLADGSDSLVVATTRPETMLGDTAVMVHPEDERYKHMIGQMVKLPLTDREIPIIADSYVDLEFGTGCVKVTPAHDFNDYAVGQRHGLPMISILTLDAKVNENAPEKYRGLDRFDARKAVVADLEALGILEKTDKHKLKVPRGDRTNVVIEPMLTDQWFVAMSKPGDDGKSITEKALDVVHSGEIKFYPENWVNTYNQWLNNIQDWCISRQLWWGHQIPAWYGDNGQIFVAHSEAEAKAEAAKQGYTGTLKRDEDVLDTWFSSALWPFSTLDWTGDEAIDAANPLLKQYLPSSVLVTGFDIIFFWVARMVMMTKQITGQIPFKHVYVHGLIRDGEGQKMSKSKGNVLDPIDLIDGIGLEALIEKRTTGLMNPKQAESIAKKTKKEFPEGIASFGTDALRFTFASLASPGRDIKFDLNRCDGYRNFCNKLWNATRFVLMNVEGHDLALEHQQNGPACGGSAPLEFSFADRWIVSQLQRVEQEVEQHFTDYRFDLIAQAIYKFIWDEFCDWYLEIAKVEIQTGNDAQQRGARRTLVRTLEAVLRLAHPLIPFITEELWQTVAPIAGRKTHDSIMLAAYPRAEEYKIDAASEAKVERLKALAYACRNLRGEMNVSPALRMPLLVAGGGAEISEFAAILQALGKLSEVQIVDDMPADAMAPVAVVGETRLMLKVEIDVAAERIRLAKEIEKLEKQISIAQGKLANEGFVARAPAAVIDQEKQRVADFTATLEQLKPQLAKLGQA.

Residues 45–55 (PNVTGTLHMGH) carry the 'HIGH' region motif. The 'KMSKS' region motif lies at 541–545 (KMSKS). Lysine 544 contacts ATP. Residues 875 to 934 (IDVAAERIRLAKEIEKLEKQISIAQGKLANEGFVARAPAAVIDQEKQRVADFTATLEQLK) are a coiled coil.

Belongs to the class-I aminoacyl-tRNA synthetase family. ValS type 1 subfamily. In terms of assembly, monomer.

Its subcellular location is the cytoplasm. It carries out the reaction tRNA(Val) + L-valine + ATP = L-valyl-tRNA(Val) + AMP + diphosphate. Catalyzes the attachment of valine to tRNA(Val). As ValRS can inadvertently accommodate and process structurally similar amino acids such as threonine, to avoid such errors, it has a 'posttransfer' editing activity that hydrolyzes mischarged Thr-tRNA(Val) in a tRNA-dependent manner. In Dechloromonas aromatica (strain RCB), this protein is Valine--tRNA ligase.